Reading from the N-terminus, the 386-residue chain is Bifunctional enzyme IspD/IspF (386 aa).

The interval 1-231 (MKNGAVIIPA…REKKEPMQKI (231 aa)) is 2-C-methyl-D-erythritol 4-phosphate cytidylyltransferase. Positions 232–386 (RIGHGFDAHQ…SCHAVVLLQQ (155 aa)) are 2-C-methyl-D-erythritol 2,4-cyclodiphosphate synthase. A divalent metal cation contacts are provided by D238 and H240. 4-CDP-2-C-methyl-D-erythritol 2-phosphate contacts are provided by residues 238–240 (DAH) and 264–265 (HS). A divalent metal cation is bound at residue H272. 4-CDP-2-C-methyl-D-erythritol 2-phosphate is bound by residues 286-288 (DIG), 362-365 (TTTE), Y369, and R372.

It in the N-terminal section; belongs to the IspD/TarI cytidylyltransferase family. IspD subfamily. In the C-terminal section; belongs to the IspF family. A divalent metal cation is required as a cofactor.

It carries out the reaction 2-C-methyl-D-erythritol 4-phosphate + CTP + H(+) = 4-CDP-2-C-methyl-D-erythritol + diphosphate. The enzyme catalyses 4-CDP-2-C-methyl-D-erythritol 2-phosphate = 2-C-methyl-D-erythritol 2,4-cyclic diphosphate + CMP. The protein operates within isoprenoid biosynthesis; isopentenyl diphosphate biosynthesis via DXP pathway; isopentenyl diphosphate from 1-deoxy-D-xylulose 5-phosphate: step 2/6. Its pathway is isoprenoid biosynthesis; isopentenyl diphosphate biosynthesis via DXP pathway; isopentenyl diphosphate from 1-deoxy-D-xylulose 5-phosphate: step 4/6. Its function is as follows. Bifunctional enzyme that catalyzes the formation of 4-diphosphocytidyl-2-C-methyl-D-erythritol from CTP and 2-C-methyl-D-erythritol 4-phosphate (MEP) (IspD), and catalyzes the conversion of 4-diphosphocytidyl-2-C-methyl-D-erythritol 2-phosphate (CDP-ME2P) to 2-C-methyl-D-erythritol 2,4-cyclodiphosphate (ME-CPP) with a corresponding release of cytidine 5-monophosphate (CMP) (IspF). This chain is Bifunctional enzyme IspD/IspF, found in Desulfotalea psychrophila (strain LSv54 / DSM 12343).